The sequence spans 277 residues: Phosphoenolpyruvate synthase regulatory protein (277 aa).

157 to 164 (GVSRCGKT) lines the ADP pocket.

This sequence belongs to the pyruvate, phosphate/water dikinase regulatory protein family. PSRP subfamily.

It carries out the reaction [pyruvate, water dikinase] + ADP = [pyruvate, water dikinase]-phosphate + AMP + H(+). The enzyme catalyses [pyruvate, water dikinase]-phosphate + phosphate + H(+) = [pyruvate, water dikinase] + diphosphate. Functionally, bifunctional serine/threonine kinase and phosphorylase involved in the regulation of the phosphoenolpyruvate synthase (PEPS) by catalyzing its phosphorylation/dephosphorylation. This chain is Phosphoenolpyruvate synthase regulatory protein, found in Escherichia fergusonii (strain ATCC 35469 / DSM 13698 / CCUG 18766 / IAM 14443 / JCM 21226 / LMG 7866 / NBRC 102419 / NCTC 12128 / CDC 0568-73).